Here is a 367-residue protein sequence, read N- to C-terminus: RYamide receptor (367 aa).

Topologically, residues 1–35 are extracellular; that stretch reads MDANTTRNESFSLDCELVNPNSTLANVYFLSAVYS. N-linked (GlcNAc...) asparagine glycans are attached at residues Asn4, Asn8, and Asn21. The helical transmembrane segment at 36 to 56 threads the bilayer; it reads MYAIIFVVALIGNSFVCYIVL. The Cytoplasmic segment spans residues 57-66; it reads SSPPMRTVTN. Residues 67 to 87 form a helical membrane-spanning segment; that stretch reads FFILNLAIGDVLITLLCVPFT. At 88–113 the chain is on the extracellular side; it reads SVSLLMQYWPFGGILCPVVNYSQALS. A glycan (N-linked (GlcNAc...) asparagine) is linked at Asn107. Residues 114–134 form a helical membrane-spanning segment; that stretch reads VFVSAYTLVAISIDKYMIIMW. The Cytoplasmic segment spans residues 135 to 143; that stretch reads PLKPRISKR. The chain crosses the membrane as a helical span at residues 144 to 164; it reads FATYIIALVWLIAGITVLPSA. At 165 to 212 the chain is on the extracellular side; that stretch reads TFTTLINDENILGTSAYEQCDKYICAEEYSKVGQEYGDLYTKVLMFLQ. Residues 213 to 233 traverse the membrane as a helical segment; it reads YVIPSLVLLFTYTSIGVVIWC. Topologically, residues 234–258 are cytoplasmic; that stretch reads HRIPGEAENSRDQRIAKNKTKMIKM. The chain crosses the membrane as a helical span at residues 259 to 279; the sequence is MVTVVCVYTICWLPYNVLMIF. The Extracellular segment spans residues 280–282; that stretch reads KEH. A helical membrane pass occupies residues 283–303; that stretch reads ISGSVMVYLYFPLHGLAMSHA. The Cytoplasmic portion of the chain corresponds to 304–367; sequence CYNPIIYCYM…EITRAQPTSA (64 aa).

The protein belongs to the G-protein coupled receptor 1 family.

Its subcellular location is the cell membrane. Its function is as follows. Receptor for the neuropeptides RYamide-1 and RYamide-2. The activity of this receptor is mediated by G proteins which activate a phosphatidyl-inositol-calcium second messenger system. RYamide-2 is the most potent activator. The chain is RYamide receptor from Tribolium castaneum (Red flour beetle).